A 507-amino-acid chain; its full sequence is ATP synthase subunit alpha (507 aa).

169 to 176 is a binding site for ATP; it reads GDRQTGKT.

This sequence belongs to the ATPase alpha/beta chains family. As to quaternary structure, F-type ATPases have 2 components, CF(1) - the catalytic core - and CF(0) - the membrane proton channel. CF(1) has five subunits: alpha(3), beta(3), gamma(1), delta(1), epsilon(1). CF(0) has three main subunits: a(1), b(2) and c(9-12). The alpha and beta chains form an alternating ring which encloses part of the gamma chain. CF(1) is attached to CF(0) by a central stalk formed by the gamma and epsilon chains, while a peripheral stalk is formed by the delta and b chains.

The protein resides in the cell membrane. The catalysed reaction is ATP + H2O + 4 H(+)(in) = ADP + phosphate + 5 H(+)(out). Its function is as follows. Produces ATP from ADP in the presence of a proton gradient across the membrane. The alpha chain is a regulatory subunit. In Desulforudis audaxviator (strain MP104C), this protein is ATP synthase subunit alpha.